The chain runs to 253 residues: rRNA adenine N-6-methyltransferase (253 aa).

Positions 14, 16, 40, 61, 85, and 101 each coordinate S-adenosyl-L-methionine. The segment at 229 to 253 (CAREESTPRPYLPDCTPTTGSISSR) is disordered. Residues 244–253 (TPTTGSISSR) show a composition bias toward polar residues.

The protein belongs to the class I-like SAM-binding methyltransferase superfamily. rRNA adenine N(6)-methyltransferase family.

Functionally, involved in erythromycin resistance. This Corynebacterium diphtheriae protein is rRNA adenine N-6-methyltransferase (ermA).